A 460-amino-acid chain; its full sequence is Cysteine--tRNA ligase (460 aa).

Position 28 (C28) interacts with Zn(2+). A 'HIGH' region motif is present at residues 30-40; sequence MTVYDYCHLGH. Residues C209, H234, and E238 each coordinate Zn(2+). Residues 266-270 carry the 'KMSKS' region motif; that stretch reads KMSKS. K269 contacts ATP.

It belongs to the class-I aminoacyl-tRNA synthetase family. In terms of assembly, monomer. Zn(2+) is required as a cofactor.

The protein localises to the cytoplasm. It catalyses the reaction tRNA(Cys) + L-cysteine + ATP = L-cysteinyl-tRNA(Cys) + AMP + diphosphate. The sequence is that of Cysteine--tRNA ligase from Thioalkalivibrio sulfidiphilus (strain HL-EbGR7).